The following is a 206-amino-acid chain: Probable GTP-binding protein EngB (206 aa).

The EngB-type G domain occupies 7 to 195 (DCDEVVLLGR…EEALQAIFSD (189 aa)). GTP-binding positions include 15–22 (GRSNVGKS), 41–45 (GVTRS), 60–63 (DLPG), 140–143 (NKID), and 175–177 (ISA). Residues Ser22 and Thr43 each coordinate Mg(2+).

It belongs to the TRAFAC class TrmE-Era-EngA-EngB-Septin-like GTPase superfamily. EngB GTPase family. Mg(2+) serves as cofactor.

Necessary for normal cell division and for the maintenance of normal septation. The protein is Probable GTP-binding protein EngB of Haloquadratum walsbyi (strain DSM 16790 / HBSQ001).